We begin with the raw amino-acid sequence, 316 residues long: MYTKILGTGSYLPVQVRSNADLEKMVDTSDEWIVTRTGIRERRIAGLDETVATMGFQAAEKTLEMAGIDKDDIGLIIVATTSSSHAFPSSACQVQRMLGIKDAASFDLAAACAGFTYALSVADQYVKSGAVKHAIVIGSDVLSRALDPEDRGTIILFGDGAGAVVLGASEQPGIMSTHLHADGRYGELLALPYPDRQQDQPAYVTMAGNEVFKVAVTELAHIVDETLQANNLDRTALDWLVPHQANLRIISATAKKLGMGMDKVVITLDRHGNTSAASVPSAFDEAVRDGRIQRGQLVLLEAFGGGFTWGSALVRF.

Catalysis depends on residues Cys112 and His243. The interval 244–248 (QANLR) is ACP-binding. Asn273 is an active-site residue.

This sequence belongs to the thiolase-like superfamily. FabH family. As to quaternary structure, homodimer.

The protein resides in the cytoplasm. The catalysed reaction is malonyl-[ACP] + acetyl-CoA + H(+) = 3-oxobutanoyl-[ACP] + CO2 + CoA. It functions in the pathway lipid metabolism; fatty acid biosynthesis. In terms of biological role, catalyzes the condensation reaction of fatty acid synthesis by the addition to an acyl acceptor of two carbons from malonyl-ACP. Catalyzes the first condensation reaction which initiates fatty acid synthesis and may therefore play a role in governing the total rate of fatty acid production. Possesses both acetoacetyl-ACP synthase and acetyl transacylase activities. Its substrate specificity determines the biosynthesis of branched-chain and/or straight-chain of fatty acids. In Yersinia pestis (strain Pestoides F), this protein is Beta-ketoacyl-[acyl-carrier-protein] synthase III.